The following is a 129-amino-acid chain: Glycine cleavage system H protein (129 aa).

The Lipoyl-binding domain maps to 24-106 (LVRVGISAFA…HGEGWLLVLR (83 aa)). Position 65 is an N6-lipoyllysine (Lys-65).

The protein belongs to the GcvH family. The glycine cleavage system is composed of four proteins: P, T, L and H. Requires (R)-lipoate as cofactor.

Its function is as follows. The glycine cleavage system catalyzes the degradation of glycine. The H protein shuttles the methylamine group of glycine from the P protein to the T protein. The polypeptide is Glycine cleavage system H protein (Synechococcus sp. (strain CC9605)).